The following is a 62-amino-acid chain: Bacteriocin lactacin-F subunit LafX (62 aa).

Residues 1 to 14 (MKLNDKELSKIVGG) constitute a propeptide that is removed on maturation.

It belongs to the bacteriocin class IIB family. This bacteriocin depends upon the complementation of two peptides for activity: LafA and LafX. Associated with a 180 kDa bacteriocin complex.

Heat stable bacteriocin active against Enterococcus faecalis and other Lactobacilli. This Lactobacillus johnsonii (strain CNCM I-12250 / La1 / NCC 533) protein is Bacteriocin lactacin-F subunit LafX (lafX).